Reading from the N-terminus, the 1296-residue chain is ABC transporter B family member 21 (1296 aa).

A disordered region spans residues 1-59 (MDSVIESEEGLKVDSPNRADAETSNSKIHEEDEKELKTESDLKEEKKKTEKNKQEEDEK). Positions 9-59 (EGLKVDSPNRADAETSNSKIHEEDEKELKTESDLKEEKKKTEKNKQEEDEK) are enriched in basic and acidic residues. A helical transmembrane segment spans residues 77–97 (IILMILGTIGAVGNGLGFPIM). Residues 80-368 (MILGTIGAVG…ASPCLSAFAA (289 aa)) form the ABC transmembrane type-1 1 domain. N113 carries an N-linked (GlcNAc...) asparagine glycan. 5 consecutive transmembrane segments (helical) span residues 128 to 148 (FVYL…GWMI), 205 to 225 (IQLV…GWLL), 227 to 247 (LVMV…AIVI), 307 to 327 (GLGL…AVWY), and 336 to 356 (GYTG…SMSL). The region spanning 403–639 (IELNNVNFSY…PEGAYSQLIR (237 aa)) is the ABC transporter 1 domain. N409 carries an N-linked (GlcNAc...) asparagine glycan. 438 to 445 (GQSGSGKS) is a binding site for ATP. N-linked (GlcNAc...) asparagine glycans are attached at residues N505, N519, and N590. Residues 640 to 662 (LQEDTKQTEDSTDEQKLSMESMK) are compositionally biased toward basic and acidic residues. A disordered region spans residues 640 to 672 (LQEDTKQTEDSTDEQKLSMESMKRSSLRKSSLS). Phosphoserine occurs at positions 657 and 660. The ABC transmembrane type-1 2 domain maps to 730–1017 (LILGSIAAVL…SSSLSPDSSK (288 aa)). 2 helical membrane-spanning segments follow: residues 731–751 (ILGS…GILI) and 774–794 (IIFM…TIFF). N-linked (GlcNAc...) asparagine glycosylation is present at N826. A run of 3 helical transmembrane segments spans residues 865–885 (VIAF…LPLI), 952–972 (GIVS…SYAA), and 986–1006 (TTFD…VAIS). An ABC transporter 2 domain is found at 1052 to 1289 (IELRHISFKY…KDGVYASLVQ (238 aa)). 1087–1094 (GESGSGKS) contacts ATP. N1141 and N1240 each carry an N-linked (GlcNAc...) asparagine glycan.

The protein belongs to the ABC transporter superfamily. ABCB family. Multidrug resistance exporter (TC 3.A.1.201) subfamily.

It localises to the membrane. The protein is ABC transporter B family member 21 (ABCB21) of Arabidopsis thaliana (Mouse-ear cress).